The following is a 513-amino-acid chain: Mesoderm induction early response protein 1 (513 aa).

The segment covering 1–16 has biased composition (low complexity); it reads MAEPSVESSSPGGSAT. A disordered region spans residues 1–174; the sequence is MAEPSVESSS…EEESEEDEDY (174 aa). Composition is skewed to basic and acidic residues over residues 17–36 and 46–63; these read SDDH…FDDE and EGER…RESD. Residues 82–107 show a composition bias toward acidic residues; it reads QEDDDDEDEEEEEEEGEDDDDVDNDD. The span at 131 to 146 shows a compositional bias: polar residues; that stretch reads QSSNDDPAPSVASQDP. Residues 157 to 261 form an interaction with HDAC1 region; sequence YFDTNSEIEE…IKDNEQALYE (105 aa). The segment covering 162–174 has biased composition (acidic residues); the sequence is SEIEEESEEDEDY. An ELM2 domain is found at 182–280; it reads KEIMVGSMFQ…ESLRRLRFNV (99 aa). Positions 285–337 constitute an SANT domain; that stretch reads EELSVWTEEECRNFEQGLKVYGKDFHVIQANKVRTRSVGECVAFYYMWKKSER. The tract at residues 368 to 513 is disordered; that stretch reads ESESAASSRA…KLEELETLDD (146 aa). Basic and acidic residues-rich tracts occupy residues 416 to 425 and 463 to 476; these read PSKDEAKPEG and SRSE…NERP. The span at 483–500 shows a compositional bias: polar residues; that stretch reads NSNGKESPGSSEFFQEAN.

The protein resides in the nucleus. Functionally, transcriptional repressor regulating the expression of a number of genes. Probably functions through recruitment of histone deacetylases involved in chromatin silencing. The sequence is that of Mesoderm induction early response protein 1 (MIER1) from Gallus gallus (Chicken).